Reading from the N-terminus, the 144-residue chain is Transcriptional regulator MraZ (144 aa).

SpoVT-AbrB domains lie at T5–E47 and T77–A120.

This sequence belongs to the MraZ family. Forms oligomers.

The protein localises to the cytoplasm. The protein resides in the nucleoid. The polypeptide is Transcriptional regulator MraZ (Mycolicibacterium gilvum (strain PYR-GCK) (Mycobacterium gilvum (strain PYR-GCK))).